Reading from the N-terminus, the 251-residue chain is Triosephosphate isomerase (251 aa).

9–11 (NWK) is a substrate binding site. Residue histidine 95 is the Electrophile of the active site. Glutamate 167 acts as the Proton acceptor in catalysis. Substrate contacts are provided by residues glycine 173, serine 212, and 233–234 (GG).

Belongs to the triosephosphate isomerase family. As to quaternary structure, homodimer.

It localises to the cytoplasm. It carries out the reaction D-glyceraldehyde 3-phosphate = dihydroxyacetone phosphate. It functions in the pathway carbohydrate biosynthesis; gluconeogenesis. The protein operates within carbohydrate degradation; glycolysis; D-glyceraldehyde 3-phosphate from glycerone phosphate: step 1/1. In terms of biological role, involved in the gluconeogenesis. Catalyzes stereospecifically the conversion of dihydroxyacetone phosphate (DHAP) to D-glyceraldehyde-3-phosphate (G3P). The protein is Triosephosphate isomerase of Pseudomonas syringae pv. syringae (strain B728a).